The sequence spans 176 residues: MIKTVQDLINERIAVGKVVNTHGLKGEVKFFPYTNSEEIVKNLSSVVLYNREKKVFYNLSVESVRRMNKLFLIKFETIDTVEAAEKIKGCEVFIKYEELPPLQNDEYYFYEILGCEVYYESGECVGKVVDIIETGSNDVLVVKKKNRETLIPMIKDCVVEIKKPEKKIVVKELEWI.

The PRC barrel domain maps to 103–176; it reads QNDEYYFYEI…KIVVKELEWI (74 aa).

This sequence belongs to the RimM family. Binds ribosomal protein uS19.

Its subcellular location is the cytoplasm. An accessory protein needed during the final step in the assembly of 30S ribosomal subunit, possibly for assembly of the head region. Essential for efficient processing of 16S rRNA. May be needed both before and after RbfA during the maturation of 16S rRNA. It has affinity for free ribosomal 30S subunits but not for 70S ribosomes. In Thermotoga neapolitana (strain ATCC 49049 / DSM 4359 / NBRC 107923 / NS-E), this protein is Ribosome maturation factor RimM.